A 479-amino-acid polypeptide reads, in one-letter code: Anaerobic nitric oxide reductase flavorubredoxin (479 aa).

The tract at residues 30–210 (LRGSSYNSYL…PFSRLVTPKI (181 aa)) is zinc metallo-hydrolase. Residues His79, Glu81, Asp83, His147, Asp166, and His227 each coordinate Fe cation. One can recognise a Flavodoxin-like domain in the interval 254–393 (ITIFYDTMSN…LCREHGREIA (140 aa)). FMN contacts are provided by residues 260–264 (TMSNN) and 342–369 (AFGS…EMSL). The region spanning 423 to 479 (GPRMQCSVCQWIYDPAKGEPMQDVAPGTPWSEVPDNFLCPECSLGKDVFEELASEAK) is the Rubredoxin-like domain. The Fe cation site is built by Cys428, Cys431, Cys461, and Cys464.

It in the N-terminal section; belongs to the zinc metallo-hydrolase group 3 family. In terms of assembly, homotetramer. The cofactor is Fe cation. Requires FMN as cofactor.

The protein resides in the cytoplasm. Its pathway is nitrogen metabolism; nitric oxide reduction. In terms of biological role, anaerobic nitric oxide reductase; uses NADH to detoxify nitric oxide (NO), protecting several 4Fe-4S NO-sensitive enzymes. Has at least 2 reductase partners, only one of which (NorW, flavorubredoxin reductase) has been identified. NO probably binds to the di-iron center; electrons enter from the reductase at rubredoxin and are transferred sequentially to the FMN center and the di-iron center. Also able to function as an aerobic oxygen reductase. This is Anaerobic nitric oxide reductase flavorubredoxin (norV) from Escherichia coli (strain K12 / DH10B).